The sequence spans 262 residues: Phosphoribosyl 1,2-cyclic phosphate 1,2-diphosphodiesterase (262 aa).

Mn(2+)-binding residues include histidine 6, histidine 8, aspartate 13, histidine 38, glutamate 63, histidine 76, histidine 193, aspartate 245, and histidine 247.

Belongs to the PHP family. It depends on Mn(2+) as a cofactor.

It catalyses the reaction alpha-D-ribose 1,2-cyclic phosphate 5-phosphate + H2O = D-ribose 2,5-bisphosphate + H(+). The enzyme catalyses D-ribose 2,5-bisphosphate + H2O = D-ribose 5-phosphate + phosphate. Involved in degradation of methylphosphonate. Catalyzes the hydrolysis of the phosphate ester at carbon-1 of 5-phospho-D-ribose 1,2-cyclic phosphate to form ribose 2,5-bisphosphate. This intermediate is then hydrolyzed to ribose-5-phosphate and inorganic phosphate. The chain is Phosphoribosyl 1,2-cyclic phosphate 1,2-diphosphodiesterase from Eggerthella lenta (strain ATCC 25559 / DSM 2243 / CCUG 17323 / JCM 9979 / KCTC 3265 / NCTC 11813 / VPI 0255 / 1899 B) (Eubacterium lentum).